Consider the following 778-residue polypeptide: Receptor like protein 28 (778 aa).

The signal sequence occupies residues 1-24; that stretch reads MSGSHLRLRFLSLLLLCCVSSSTS. The Extracellular segment spans residues 25 to 739; the sequence is SLFTFSYPVL…EEQEQVLNWK (715 aa). 8 N-linked (GlcNAc...) asparagine glycosylation sites follow: N60, N72, N93, N106, N111, N147, N170, and N173. 5 LRR repeats span residues 99-123, 125-147, 148-171, 172-195, and 197-219; these read FHQLRFLNLSHNNFTSTSFPSEFGN, NKVEVLDLSFNSFTGQVPSSFSN, LSQLTELHLSNNQLTGGFPQVQNL, TNLSHLDFENNKFSGTVPSSLLMM, and FLSYLNLYGNHFTGSIEVSTSSK. The LRR 6; degenerate repeat unit spans residues 220 to 240; that stretch reads LEILYLGLKPFEGQILEPISK. LRR repeat units lie at residues 241-265, 266-291, 293-313, 314-338, 340-363, and 364-387; these read LINLKRLELSFLNISYPLDLNLFSS, LKSLTYLDLSGNSISPRSLRSDLYIP, TLEKLLLEQCGIIEFPNILKT, LQKLEYIDMSNNRINGKIPEWLWRL, RLRSMSLANNSFNGFEGSTDVLVN, and SSMEILFMHSNNIQGALPNLPLSI. N253 is a glycosylation site (N-linked (GlcNAc...) asparagine). N348 and N363 each carry an N-linked (GlcNAc...) asparagine glycan. The LRR 13; degenerate repeat unit spans residues 388 to 407; sequence KAFSAGYNNFSGEIPLSICN. N396, N407, N420, N431, and N476 each carry an N-linked (GlcNAc...) asparagine glycan. LRR repeat units follow at residues 408 to 429, 430 to 453, 455 to 477, 479 to 500, 501 to 525, 528 to 552, 601 to 625, 626 to 649, 650 to 673, and 678 to 700; these read RSSLAALSLPYNNFTGKIPQCL, SNLTFVHLRKNNLEGSIPDTLCAG, SLQTLDIGFNLISGTLPRSLLNC, SLEFLSVDNNRIKDTFPFWLKA, LPNLQVLILSSNKLYGPIAPPHQSP, FPELRIFEIADNMFTGTLSPRYFVN, LNSYSAIDFSGNRLEGQIPKSIGLL, KELIALNLSNNAFTCHIPLSLANA, TELESLDLSRNQLSGTIPNGLKTL, and YINVSHNKLKGTQIIGQHKSSFE. 2 N-linked (GlcNAc...) asparagine glycosylation sites follow: N632 and N648. N680 is a glycosylation site (N-linked (GlcNAc...) asparagine). The chain crosses the membrane as a helical span at residues 740-760; sequence AVATGYGTGLLLGLAIAQVIA. Over 761–778 the chain is Cytoplasmic; it reads SYKPDWLVKIIGLFRFCF.

This sequence belongs to the RLP family.

It is found in the cell membrane. The chain is Receptor like protein 28 from Arabidopsis thaliana (Mouse-ear cress).